Reading from the N-terminus, the 353-residue chain is G-protein coupled estrogen receptor 1 (353 aa).

Topologically, residues 1–40 (MEEQTTNVIQIYVNGTEQFNASFDFNITDVKESTDTYEFY) are extracellular. The helical transmembrane segment at 41-61 (IIGLFLSCLYTIFLFPIGFIG) threads the bilayer. At 62 to 81 (NILILVVNLNHRERMTIPDL) the chain is on the cytoplasmic side. Residues 82–102 (YFVNLAVADLILVADSLIEVF) traverse the membrane as a helical segment. Residues 103 to 112 (NLNEKYYDYA) are Extracellular-facing. The helical transmembrane segment at 113 to 133 (VLCTFMSLFLQVNMYSSIFFL) threads the bilayer. Cysteines 115 and 192 form a disulfide. The Cytoplasmic segment spans residues 134-160 (TWMSFDRYVALTSSMSSSPLRTMQHAK). A helical membrane pass occupies residues 161–181 (LSCSLIWMASILATLLPFTIV). Residues 182–202 (QTQHTGEVHFCFANVFEIQWL) lie on the Extracellular side of the membrane. Residues 203 to 223 (EVTIGFLIPFSIIGLCYSLIV) traverse the membrane as a helical segment. The Cytoplasmic segment spans residues 224-245 (RTLMRAQKHKGLWPRRQKALRM). Residues 246–266 (IVVVVLVFFICWLPENVFISI) form a helical membrane-spanning segment. The Extracellular portion of the chain corresponds to 267–292 (QLLQGTADPSKRTDTTLWHDYPLTGH). The chain crosses the membrane as a helical span at residues 293–313 (IVNLAAFSNSCLNPIIYSFLG). The Cytoplasmic segment spans residues 314–353 (ETFRDKLRLFIKRKASWSVVYRFCNHTLDLQIPVRSESEV).

Belongs to the G-protein coupled receptor 1 family. As to quaternary structure, homodimer. Heterodimer. In terms of tissue distribution, expressed in brain regions that are known to control reproduction and sex behavior. Expressed in ovary, muscle and intestine. Expressed in early germ cells of the testis, including the spermatogonia, spermatocytes, and somatic cells such as Sertoli cells.

The protein localises to the nucleus. The protein resides in the cytoplasm. It localises to the perinuclear region. Its subcellular location is the cytoskeleton. It is found in the cytoplasmic vesicle membrane. The protein localises to the cell membrane. The protein resides in the basolateral cell membrane. It localises to the endoplasmic reticulum membrane. Its subcellular location is the early endosome. It is found in the recycling endosome. The protein localises to the golgi apparatus. The protein resides in the trans-Golgi network. It localises to the golgi apparatus membrane. Its subcellular location is the cell projection. It is found in the dendrite. The protein localises to the dendritic spine membrane. The protein resides in the axon. It localises to the postsynaptic density. Its subcellular location is the mitochondrion membrane. Membrane G-protein coupled estrogen receptor that binds to 17-beta-estradiol (E2) with high affinity, leading to rapid and transient activation of numerous intracellular signaling pathways. Plays a role in the embryonic development of sensory and motor neurons. Specifically induces apoptosis and reduces proliferation of brain cells. Involved in maintenance of meiotic arrest in oocytes. The protein is G-protein coupled estrogen receptor 1 (gper1) of Danio rerio (Zebrafish).